A 288-amino-acid polypeptide reads, in one-letter code: Alpha/beta hydrolase domain-containing protein 17B (288 aa).

Catalysis depends on charge relay system residues Ser-170, Asp-235, and His-264. At Ser-282 the chain carries Phosphoserine.

The protein belongs to the AB hydrolase superfamily. ABHD17 family. Palmitoylated on cysteine residues located in a cysteine cluster at the N-terminus which promotes membrane localization. Palmitoylation is required for post-synaptic localization and for depalmitoylating activity towards DLG4/PSD95. As to expression, expressed in brain.

It is found in the cell membrane. The protein localises to the recycling endosome membrane. The protein resides in the cell projection. Its subcellular location is the dendritic spine. It localises to the postsynaptic density membrane. It catalyses the reaction S-hexadecanoyl-L-cysteinyl-[protein] + H2O = L-cysteinyl-[protein] + hexadecanoate + H(+). Functionally, hydrolyzes fatty acids from S-acylated cysteine residues in proteins. Has depalmitoylating activity towards DLG4/PSD95. Has depalmitoylating activity towards GAP43. Has depalmitoylating activity towards MAP6. Has depalmitoylating activity towards NRAS. In Mus musculus (Mouse), this protein is Alpha/beta hydrolase domain-containing protein 17B.